A 236-amino-acid polypeptide reads, in one-letter code: DNA repair protein RecO (236 aa).

This sequence belongs to the RecO family.

Functionally, involved in DNA repair and RecF pathway recombination. The protein is DNA repair protein RecO of Cellvibrio japonicus (strain Ueda107) (Pseudomonas fluorescens subsp. cellulosa).